Consider the following 252-residue polypeptide: MILYEYPFNERIRTLLRLEDLFERLDFFLTQEHPLQHHVALTTLFEIVDVAGRADLKSDLLKELDRQRQTLTVLRSNPQIDQEALDAVIAELETASGNLTATHGKAGQLIADNEWLTSIRSRAIIPGGTCEFDLPAYFAWQHHPGERRRADIVKWAQPLVPLRDATMIVLRLLRESGQSGKVIANAGSYQQMLSGRIYQLMQVRLDDVALGFIPEISANKYMLWVRFTQQDGDLRPKPVDADIPFQLKLCNF.

The protein belongs to the ZapD family. As to quaternary structure, interacts with FtsZ.

The protein localises to the cytoplasm. Cell division factor that enhances FtsZ-ring assembly. Directly interacts with FtsZ and promotes bundling of FtsZ protofilaments, with a reduction in FtsZ GTPase activity. The sequence is that of Cell division protein ZapD from Ralstonia nicotianae (strain ATCC BAA-1114 / GMI1000) (Ralstonia solanacearum).